The primary structure comprises 367 residues: Testis-specific serine/threonine-protein kinase 1 (367 aa).

The Protein kinase domain maps to 12-272; sequence YLLGINLGEG…IDEILSHCWM (261 aa). ATP-binding positions include 18-26 and lysine 41; that span reads LGEGSYAKV. Aspartate 136 acts as the Proton acceptor in catalysis. Threonine 174 bears the Phosphothreonine mark. The interval 276–367 is disordered; sequence ARGSPSVAIN…PQQPPETRAQ (92 aa). Positions 303 to 314 are enriched in basic and acidic residues; that stretch reads GSDKKSATKLEP.

It belongs to the protein kinase superfamily. CAMK Ser/Thr protein kinase family. As to quaternary structure, interacts with TSSK2. Interacts with HSP90; this interaction stabilizes TSSK1. Requires Mg(2+) as cofactor. Autophosphorylated. In terms of processing, ubiquitinated; HSP90 activity negatively regulates ubiquitination and degradation. Testis-specific. Present in sperm (at protein level).

It localises to the cytoplasm. Its subcellular location is the cytoplasmic vesicle. The protein resides in the secretory vesicle. The protein localises to the acrosome. It is found in the cell projection. It localises to the cilium. Its subcellular location is the flagellum. It catalyses the reaction L-seryl-[protein] + ATP = O-phospho-L-seryl-[protein] + ADP + H(+). It carries out the reaction L-threonyl-[protein] + ATP = O-phospho-L-threonyl-[protein] + ADP + H(+). Kinase activity is specifically inhibited by 2 classes of compounds: biphenyl compounds (1,1'-(biphenyl-4,4'-diyl)bis(2,2-dihydroxyethanone)) and 1,2,7-trialky-1H-imidazo[4,5-g]quinoxalin-6-one. Activated by phosphorylation on Thr-174 and potentially by autophosphorylation. Its function is as follows. Testis-specific serine/threonine-protein kinase required during spermatid development. Phosphorylates 'Ser-288' of TSKS. Involved in the late stages of spermatogenesis, during the reconstruction of the cytoplasm. During spermatogenesis, required for the transformation of a ring-shaped structure around the base of the flagellum originating from the chromatoid body. The polypeptide is Testis-specific serine/threonine-protein kinase 1 (TSSK1B) (Homo sapiens (Human)).